The sequence spans 78 residues: Short neurotoxin SNTX11 (78 aa).

The signal sequence occupies residues 1 to 21 (MKTLLLTFLVVTIVCLDLGYT). 4 disulfides stabilise this stretch: cysteine 24–cysteine 40, cysteine 33–cysteine 58, cysteine 62–cysteine 70, and cysteine 71–cysteine 76.

This sequence belongs to the three-finger toxin family. Short-chain subfamily. As to expression, expressed by the venom gland.

It localises to the secreted. In terms of biological role, this three-finger toxin binds and inhibits the nicotinic acetylcholine receptor (nAChR). This is Short neurotoxin SNTX11 from Ophiophagus hannah (King cobra).